A 762-amino-acid polypeptide reads, in one-letter code: Putative BTB/POZ domain-containing protein L272 (762 aa).

The 71-residue stretch at 16 to 86 (TDITIILKDE…FYGQKIKSHN (71 aa)) folds into the BTB domain. Positions 390 to 410 (DLDNSNDLNDSNDLDDSDDSN) are enriched in acidic residues. Disordered regions lie at residues 390–411 (DLDNSNDLNDSNDLDDSDDSND) and 532–556 (ISDNSDNLNNSDNSDDLDNPDNSDN). The segment covering 532 to 543 (ISDNSDNLNNSD) has biased composition (low complexity). The stretch at 737–762 (FSENYCDELINRLNNALKKIEQKYPN) forms a coiled coil.

The protein belongs to the mimivirus BTB/WD family.

This Acanthamoeba polyphaga (Amoeba) protein is Putative BTB/POZ domain-containing protein L272.